We begin with the raw amino-acid sequence, 418 residues long: UDP-N-acetylglucosamine 1-carboxyvinyltransferase (418 aa).

22 to 23 (KN) is a binding site for phosphoenolpyruvate. R93 serves as a coordination point for UDP-N-acetyl-alpha-D-glucosamine. C117 (proton donor) is an active-site residue. 2-(S-cysteinyl)pyruvic acid O-phosphothioketal is present on C117. Residues D305 and V327 each contribute to the UDP-N-acetyl-alpha-D-glucosamine site.

The protein belongs to the EPSP synthase family. MurA subfamily.

It is found in the cytoplasm. It catalyses the reaction phosphoenolpyruvate + UDP-N-acetyl-alpha-D-glucosamine = UDP-N-acetyl-3-O-(1-carboxyvinyl)-alpha-D-glucosamine + phosphate. It functions in the pathway cell wall biogenesis; peptidoglycan biosynthesis. Cell wall formation. Adds enolpyruvyl to UDP-N-acetylglucosamine. The chain is UDP-N-acetylglucosamine 1-carboxyvinyltransferase from Alkalilimnicola ehrlichii (strain ATCC BAA-1101 / DSM 17681 / MLHE-1).